The sequence spans 81 residues: Photosystem I iron-sulfur center (81 aa).

4Fe-4S ferredoxin-type domains lie at 2 to 31 (SHSVKIYDTCIGCTQCVRACPLDVLEMVPW) and 37 to 68 (GQIASSPRTEDCIGCKRCETACPTDFLSVRVY). [4Fe-4S] cluster contacts are provided by C11, C14, C17, C21, C48, C51, C54, and C58.

In terms of assembly, the cyanobacterial PSI reaction center is composed of one copy each of PsaA,B,C,D,E,F,I,J,K,L,M and X, and forms trimeric complexes. [4Fe-4S] cluster serves as cofactor.

The protein localises to the cellular thylakoid membrane. The enzyme catalyses reduced [plastocyanin] + hnu + oxidized [2Fe-2S]-[ferredoxin] = oxidized [plastocyanin] + reduced [2Fe-2S]-[ferredoxin]. Apoprotein for the two 4Fe-4S centers FA and FB of photosystem I (PSI); essential for photochemical activity. FB is the terminal electron acceptor of PSI, donating electrons to ferredoxin. The C-terminus interacts with PsaA/B/D and helps assemble the protein into the PSI complex. Required for binding of PsaD and PsaE to PSI. PSI is a plastocyanin/cytochrome c6-ferredoxin oxidoreductase, converting photonic excitation into a charge separation, which transfers an electron from the donor P700 chlorophyll pair to the spectroscopically characterized acceptors A0, A1, FX, FA and FB in turn. In Trichodesmium erythraeum (strain IMS101), this protein is Photosystem I iron-sulfur center.